The following is a 165-amino-acid chain: Transcription antitermination protein NusB (165 aa).

The interval 139 to 165 (EAVRSHRRNKRPAADKPVATDKPAAAE) is disordered.

It belongs to the NusB family.

Functionally, involved in transcription antitermination. Required for transcription of ribosomal RNA (rRNA) genes. Binds specifically to the boxA antiterminator sequence of the ribosomal RNA (rrn) operons. The sequence is that of Transcription antitermination protein NusB from Laribacter hongkongensis (strain HLHK9).